Here is a 239-residue protein sequence, read N- to C-terminus: Uridylate kinase (239 aa).

13–16 serves as a coordination point for ATP; it reads KLSG. A UMP-binding site is contributed by Gly-55. 2 residues coordinate ATP: Gly-56 and Arg-60. UMP-binding positions include Asp-75 and 136 to 143; that span reads TGNPFFTT. Thr-163, Asn-164, Tyr-169, and Asp-172 together coordinate ATP.

Belongs to the UMP kinase family. In terms of assembly, homohexamer.

The protein resides in the cytoplasm. The catalysed reaction is UMP + ATP = UDP + ADP. Its pathway is pyrimidine metabolism; CTP biosynthesis via de novo pathway; UDP from UMP (UMPK route): step 1/1. With respect to regulation, inhibited by UTP. In terms of biological role, catalyzes the reversible phosphorylation of UMP to UDP. The sequence is that of Uridylate kinase from Neisseria meningitidis serogroup A / serotype 4A (strain DSM 15465 / Z2491).